The chain runs to 970 residues: Protein translocase subunit SecA (970 aa).

ATP contacts are provided by residues Gln-99, 117–121, and Asp-631; that span reads GEGKT.

This sequence belongs to the SecA family. In terms of assembly, monomer and homodimer. Part of the essential Sec protein translocation apparatus which comprises SecA, SecYEG and auxiliary proteins SecDF. Other proteins may also be involved.

The protein resides in the cell inner membrane. It localises to the cytoplasm. The catalysed reaction is ATP + H2O + cellular proteinSide 1 = ADP + phosphate + cellular proteinSide 2.. Its function is as follows. Part of the Sec protein translocase complex. Interacts with the SecYEG preprotein conducting channel. Has a central role in coupling the hydrolysis of ATP to the transfer of proteins into and across the cell membrane, serving as an ATP-driven molecular motor driving the stepwise translocation of polypeptide chains across the membrane. The chain is Protein translocase subunit SecA from Chlamydia pneumoniae (Chlamydophila pneumoniae).